The sequence spans 351 residues: Uroporphyrinogen decarboxylase (351 aa).

Residues 25 to 29 (RQAGR), D74, Y151, S206, and H325 contribute to the substrate site.

This sequence belongs to the uroporphyrinogen decarboxylase family. Homodimer.

The protein localises to the cytoplasm. The enzyme catalyses uroporphyrinogen III + 4 H(+) = coproporphyrinogen III + 4 CO2. It participates in porphyrin-containing compound metabolism; protoporphyrin-IX biosynthesis; coproporphyrinogen-III from 5-aminolevulinate: step 4/4. In terms of biological role, catalyzes the decarboxylation of four acetate groups of uroporphyrinogen-III to yield coproporphyrinogen-III. This Chlorobium phaeobacteroides (strain DSM 266 / SMG 266 / 2430) protein is Uroporphyrinogen decarboxylase.